The chain runs to 134 residues: Small ribosomal subunit protein uS9 (134 aa).

The segment at 97 to 134 (ENRQDLKSCGFLTRDPRKKERKKYGHKKARKSFQFSKR) is disordered. Residues 115–134 (KERKKYGHKKARKSFQFSKR) are compositionally biased toward basic residues.

The protein belongs to the universal ribosomal protein uS9 family.

This chain is Small ribosomal subunit protein uS9 (rpsI), found in Chlamydia pneumoniae (Chlamydophila pneumoniae).